A 321-amino-acid chain; its full sequence is Histidine N-alpha-methyltransferase (321 aa).

L-histidine is bound at residue Tyr56. S-adenosyl-L-methionine is bound by residues Gly86, Lys92, Asp113, and 141–142 (DF). L-histidine contacts are provided by residues Asn166, Tyr206, and 282–284 (EVS).

Belongs to the methyltransferase superfamily. EgtD family. As to quaternary structure, monomer.

The catalysed reaction is L-histidine + 3 S-adenosyl-L-methionine = hercynine + 3 S-adenosyl-L-homocysteine + 3 H(+). It functions in the pathway amino-acid biosynthesis; ergothioneine biosynthesis. Functionally, catalyzes the SAM-dependent triple methylation of the alpha-amino group of histidine to form hercynine, a step in the biosynthesis pathway of ergothioneine (ERG). ERG is one of the major redox buffers which protects bacteria against redox stressors and antibiotics; loss of ERG or mycothiol (MSH, the other major redox buffer in this bacteria) leads to respiratory alterations and bioenergetic deficiencies that negatively impact virulence. In Mycobacterium tuberculosis (strain CDC 1551 / Oshkosh), this protein is Histidine N-alpha-methyltransferase (egtD).